The sequence spans 619 residues: Keratin, type II cytoskeletal 1 (619 aa).

Residues 1-180 (MSRHFSSRSG…DPEIQKVKTR (180 aa)) form a head region. At Arg12 the chain carries Omega-N-methylarginine. Phosphoserine occurs at positions 18 and 21. Residues 28–49 (QRRTTSSSVRHSGGGGGRFSGG) form a disordered region. The span at 39–49 (SGGGGGRFSGG) shows a compositional bias: gly residues. The residue at position 45 (Arg45) is an Omega-N-methylarginine. At Ser68 the chain carries Phosphoserine. A coiled-coil region spans residues 173–477 (EIQKVKTRER…ELMNTKLALD (305 aa)). The coil 1A stretch occupies residues 181–216 (EREQIKSLNNQFASFIDKVRFLEQQNQVLQTKWELL). The IF rod domain maps to 181 to 494 (EREQIKSLNN…TLLEGEESRM (314 aa)). Positions 217–235 (QQVDTSTRTHSLEPYFENY) are linker 1. The tract at residues 236 to 327 (ISNLRRRVDQ…TLYQAELSQM (92 aa)) is coil 1B. At Lys277 the chain carries N6,N6-dimethyllysine. The interval 328–351 (QTQISETNVILSMDNNRSLDLDSI) is linker 12. Ser345 bears the Phosphoserine mark. The interval 352 to 490 (ISEVKAQYEE…ATYRTLLEGE (139 aa)) is coil 2. Residues 491–619 (ESRMSGECAP…VSTSYSRAVR (129 aa)) form a tail region. Omega-N-methylarginine is present on residues Arg519 and Arg575. Positions 559–619 (GGGGGGYGSS…VSTSYSRAVR (61 aa)) are disordered. Over residues 573 to 595 (GHRGGSGGGSRSGGSSGGRGSSS) the composition is skewed to gly residues. The segment covering 596-606 (GGIKTSSGSSS) has biased composition (low complexity). Positions 607–619 (VKFVSTSYSRAVR) are enriched in polar residues.

The protein belongs to the intermediate filament family. As to quaternary structure, heterotetramer of two type I and two type II keratins. Heterodimer with KRT10. Two heterodimers of KRT1 and KRT10 form a heterotetramer. Forms a heterodimer with KRT14; the interaction is more abundant in the absence of KRT5. Interacts with ITGB1 in the presence of RACK1 and SRC, and with RACK1. Interacts with C1QBP; the association represents a cell surface kininogen receptor. Interacts with EPPK1; interaction is dependent of higher-order structure of intermediate filament. Post-translationally, undergoes deimination of some arginine residues (citrullination).

It is found in the cell membrane. It localises to the cytoplasm. In terms of biological role, may regulate the activity of kinases such as PKC and SRC via binding to integrin beta-1 (ITB1) and the receptor of activated protein C kinase 1 (RACK1). In complex with C1QBP is a high affinity receptor for kininogen-1/HMWK. In Canis lupus familiaris (Dog), this protein is Keratin, type II cytoskeletal 1.